The following is a 369-amino-acid chain: Geranylgeranyl pyrophosphate synthase, chloroplastic (369 aa).

Positions 118, 121, and 150 each coordinate isopentenyl diphosphate. Mg(2+) contacts are provided by aspartate 157 and aspartate 163. A dimethylallyl diphosphate-binding site is contributed by arginine 168. Isopentenyl diphosphate is bound at residue arginine 169. The dimethylallyl diphosphate site is built by lysine 254, threonine 255, glutamine 292, lysine 309, and lysine 319.

It belongs to the FPP/GGPP synthase family. In terms of assembly, monomer. Requires Mg(2+) as cofactor.

The protein localises to the plastid. It is found in the chloroplast. The enzyme catalyses isopentenyl diphosphate + dimethylallyl diphosphate = (2E)-geranyl diphosphate + diphosphate. It carries out the reaction isopentenyl diphosphate + (2E)-geranyl diphosphate = (2E,6E)-farnesyl diphosphate + diphosphate. The catalysed reaction is isopentenyl diphosphate + (2E,6E)-farnesyl diphosphate = (2E,6E,10E)-geranylgeranyl diphosphate + diphosphate. It participates in isoprenoid biosynthesis; farnesyl diphosphate biosynthesis; farnesyl diphosphate from geranyl diphosphate and isopentenyl diphosphate: step 1/1. It functions in the pathway isoprenoid biosynthesis; geranyl diphosphate biosynthesis; geranyl diphosphate from dimethylallyl diphosphate and isopentenyl diphosphate: step 1/1. The protein operates within isoprenoid biosynthesis; geranylgeranyl diphosphate biosynthesis; geranylgeranyl diphosphate from farnesyl diphosphate and isopentenyl diphosphate: step 1/1. Catalyzes the trans-addition of the three molecules of IPP onto DMAPP to form geranylgeranyl pyrophosphate. This chain is Geranylgeranyl pyrophosphate synthase, chloroplastic, found in Capsicum annuum (Capsicum pepper).